A 53-amino-acid chain; its full sequence is MRDDDDLVPPKWRPLFNNQDWLLHDIVVKSFYGFGVIAAIAHLLVYLWKPWLP.

Residue methionine 1 is modified to N-formylmethionine. Residues 1-25 lie on the Cytoplasmic side of the membrane; the sequence is MRDDDDLVPPKWRPLFNNQDWLLHD. A bacteriochlorophyll-binding residues include histidine 24 and histidine 42. A helical transmembrane segment spans residues 26-48; the sequence is IVVKSFYGFGVIAAIAHLLVYLW. Topologically, residues 49–53 are periplasmic; the sequence is KPWLP.

This sequence belongs to the antenna complex beta subunit family. As to quaternary structure, the core complex is formed by different alpha and beta chains, binding bacteriochlorophyll molecules, and arranged most probably in tetrameric structures disposed around the reaction center. The non-pigmented gamma chains may constitute additional components.

The protein resides in the cell membrane. Antenna complexes are light-harvesting systems, which transfer the excitation energy to the reaction centers. This is Light-harvesting protein B-808/866 beta chain (puf2B) from Chloroflexus aurantiacus (strain ATCC 29366 / DSM 635 / J-10-fl).